Reading from the N-terminus, the 353-residue chain is Guanine nucleotide-binding protein alpha-3 subunit (353 aa).

A lipid anchor (N-myristoyl glycine) is attached at Gly2. Cys4 carries the S-palmitoyl cysteine lipid modification. Residues 32 to 353 (KVVKLLLLGA…IQANLQGCGL (322 aa)) form the G-alpha domain. Residues 35 to 48 (KLLLLGAGECGKST) form a G1 motif region. GTP contacts are provided by residues 40-47 (GAGECGKS), 176-182 (LLSRIKT), 201-205 (DVGGQ), 270-273 (NKKD), and Ala326. Mg(2+) is bound by residues Ser47 and Thr182. Residues 174 to 182 (DILLSRIKT) form a G2 motif region. The segment at 197–206 (FRVFDVGGQR) is G3 motif. A G4 motif region spans residues 266–273 (ILFLNKKD). A G5 motif region spans residues 324–329 (TCATDT).

The protein belongs to the G-alpha family. G(q) subfamily. As to quaternary structure, g proteins are composed of 3 units; alpha, beta and gamma. The alpha chain contains the guanine nucleotide binding site.

Guanine nucleotide-binding proteins (G proteins) are involved as modulators or transducers in various transmembrane signaling systems. Promotes transcription of 3',5'-cyclic phosphodiesterases pde-1 and pde-5, leading to reduced cGMP levels in sensory neurons. This causes suppression of insulin production and signaling which leads to increased daf-16 activity and contributes to increased adult lifespan and resistance to oxidative stress. In addition, by reducing cGMP levels, inhibits TGF-beta signaling pathways. Involved in behavioral response to P.aeruginosa by controlling the expression of daf-7, a member of the TGF-beta family, in ASJ sensory neurons. Plays a role in the avoidance response to the noxious chemical quinine in ASH sensory neurons. The protein is Guanine nucleotide-binding protein alpha-3 subunit of Caenorhabditis elegans.